Reading from the N-terminus, the 449-residue chain is Tubulin alpha-1C chain (449 aa).

The MREC motif signature appears at 1–4 (MREC). A GTP-binding site is contributed by Gln11. N6-acetyllysine is present on Lys40. GTP contacts are provided by Glu71, Ser140, Gly144, Thr145, Thr179, Asn206, and Asn228. Glu71 serves as a coordination point for Mg(2+). Glu254 is an active-site residue. A 3'-nitrotyrosine modification is found at Tyr282. The residue at position 432 (Tyr432) is a Phosphotyrosine. Position 439 is a phosphoserine (Ser439). Tyr449 carries the post-translational modification 3'-nitrotyrosine.

The protein belongs to the tubulin family. Dimer of alpha and beta chains. A typical microtubule is a hollow water-filled tube with an outer diameter of 25 nm and an inner diameter of 15 nM. Alpha-beta heterodimers associate head-to-tail to form protofilaments running lengthwise along the microtubule wall with the beta-tubulin subunit facing the microtubule plus end conferring a structural polarity. Microtubules usually have 13 protofilaments but different protofilament numbers can be found in some organisms and specialized cells. The cofactor is Mg(2+). Some glutamate residues at the C-terminus are polyglycylated, resulting in polyglycine chains on the gamma-carboxyl group. Glycylation is mainly limited to tubulin incorporated into axonemes (cilia and flagella) whereas glutamylation is prevalent in neuronal cells, centrioles, axonemes, and the mitotic spindle. Both modifications can coexist on the same protein on adjacent residues, and lowering polyglycylation levels increases polyglutamylation, and reciprocally. Cilia and flagella glycylation is required for their stability and maintenance. Flagella glycylation controls sperm motility. In terms of processing, some glutamate residues at the C-terminus are polyglutamylated, resulting in polyglutamate chains on the gamma-carboxyl group. Polyglutamylation plays a key role in microtubule severing by spastin (SPAST). SPAST preferentially recognizes and acts on microtubules decorated with short polyglutamate tails: severing activity by SPAST increases as the number of glutamates per tubulin rises from one to eight, but decreases beyond this glutamylation threshold. Glutamylation is also involved in cilia motility. Post-translationally, acetylation of alpha chains at Lys-40 is located inside the microtubule lumen. This modification has been correlated with increased microtubule stability, intracellular transport and ciliary assembly. Methylation of alpha chains at Lys-40 is found in mitotic microtubules and is required for normal mitosis and cytokinesis contributing to genomic stability. In terms of processing, nitration of Tyr-449 is irreversible and interferes with normal dynein intracellular distribution. Post-translationally, undergoes a tyrosination/detyrosination cycle, the cyclic removal and re-addition of a C-terminal tyrosine residue by the enzymes tubulin tyrosine carboxypeptidase (MATCAP1, VASH1 or VASH2) and tubulin tyrosine ligase (TTL), respectively. Tyrosination promotes microtubule interaction with CAP-Gly domain-containing proteins such as CLIP1, CLIP2 and DCTN1. Tyrosination regulates the initiation of dynein-dynactin motility via interaction with DCTN1, which brings the dynein-dynactin complex into contact with microtubules. In neurons, tyrosinated tubulins mediate the initiation of retrograde vesicle transport. In terms of processing, detyrosination is involved in metaphase plate congression by guiding chromosomes during mitosis: detyrosination promotes interaction with CENPE, promoting pole-proximal transport of chromosomes toward the equator. Detyrosination increases microtubules-dependent mechanotransduction in dystrophic cardiac and skeletal muscle. In cardiomyocytes, detyrosinated microtubules are required to resist to contractile compression during contraction: detyrosination promotes association with desmin (DES) at force-generating sarcomeres, leading to buckled microtubules and mechanical resistance to contraction.

The protein resides in the cytoplasm. The protein localises to the cytoskeleton. The catalysed reaction is GTP + H2O = GDP + phosphate + H(+). Its function is as follows. Tubulin is the major constituent of microtubules, a cylinder consisting of laterally associated linear protofilaments composed of alpha- and beta-tubulin heterodimers. Microtubules grow by the addition of GTP-tubulin dimers to the microtubule end, where a stabilizing cap forms. Below the cap, tubulin dimers are in GDP-bound state, owing to GTPase activity of alpha-tubulin. The protein is Tubulin alpha-1C chain (Tuba1c) of Rattus norvegicus (Rat).